The primary structure comprises 140 residues: uncharacterized protein (140 aa).

Transmembrane regions (helical) follow at residues 20–42 (ILYYGGLIGIIFMAITFAIYVSG), 88–110 (FVALAFLAMITIICYLAIIPVLL), and 115–137 (IIYTILAIAEVIILLLAASGLLQ).

It is found in the cell membrane. This is an uncharacterized protein from Archaeoglobus fulgidus (strain ATCC 49558 / DSM 4304 / JCM 9628 / NBRC 100126 / VC-16).